The sequence spans 505 residues: L-carnitine/gamma-butyrobetaine antiporter (505 aa).

A run of 12 helical transmembrane segments spans residues 10–30 (IEPK…WLTV), 51–71 (WGWA…WLVF), 92–112 (IFMM…SIEI), 143–163 (GPLP…FFFV), 195–215 (FYLV…TPLV), 231–251 (LDAI…ACGL), 263–283 (SYLS…SFIM), 316–336 (WTVF…IFLA), 347–367 (LCFG…TVLG), 403–423 (LSTA…VTLI), 446–466 (LLVR…LLAL), and 475–495 (AIIA…LSFI).

Belongs to the BCCT transporter (TC 2.A.15) family. CaiT subfamily. Homotrimer.

The protein localises to the cell inner membrane. The catalysed reaction is 4-(trimethylamino)butanoate(in) + (R)-carnitine(out) = 4-(trimethylamino)butanoate(out) + (R)-carnitine(in). It participates in amine and polyamine metabolism; carnitine metabolism. Its function is as follows. Catalyzes the exchange of L-carnitine for gamma-butyrobetaine. This is L-carnitine/gamma-butyrobetaine antiporter from Salmonella typhi.